The sequence spans 713 residues: Cyclomaltodextrin glucanotransferase (713 aa).

The first 27 residues, 1–27 (MKKISKLTTALALSLSLALSLLGPAHA), serve as a signal peptide directing secretion. The A1 stretch occupies residues 28-165 (APDTSVSNKQ…NIKVIIDFAP (138 aa)). Positions 54, 56, 59, and 60 each coordinate Ca(2+). Cysteine 70 and cysteine 77 are oxidised to a cystine. Positions 78 and 80 each coordinate Ca(2+). Residue 127–128 (YW) participates in substrate binding. Asparagine 166 provides a ligand contact to Ca(2+). The segment at 166–229 (NHTSPASLDQ…NLYDLADLNH (64 aa)) is b. Residue histidine 167 coordinates substrate. Residue isoleucine 217 coordinates Ca(2+). 220–223 (NLYD) is a binding site for substrate. Aspartate 226 is a binding site for Ca(2+). Positions 230–433 (NNSTVDTYLK…LRKSNPAIAY (204 aa)) are A2. Residue arginine 254 coordinates substrate. Aspartate 256 acts as the Nucleophile in catalysis. 259–260 (KH) is a binding site for substrate. Histidine 260 provides a ligand contact to Ca(2+). The Proton donor role is filled by glutamate 284. Substrate-binding residues include histidine 354, aspartate 398, and arginine 402. The tract at residues 434-522 (GTTQERWINN…GTAVWQYTTA (89 aa)) is c. Residues 523–609 (VTAPTIGHVG…SNVHDNFEVL (87 aa)) form a d region. An IPT/TIG domain is found at 526-607 (PTIGHVGPMM…TSSNVHDNFE (82 aa)). Residues 608–713 (VLSGDQVSVR…TATINVNWQP (106 aa)) form the CBM20 domain. The e stretch occupies residues 610–713 (SGDQVSVRFV…TATINVNWQP (104 aa)).

It belongs to the glycosyl hydrolase 13 family. In terms of assembly, monomer. Requires Ca(2+) as cofactor.

It localises to the secreted. The catalysed reaction is Cyclizes part of a (1-&gt;4)-alpha-D-glucan chain by formation of a (1-&gt;4)-alpha-D-glucosidic bond.. In Bacillus sp. (strain 17-1), this protein is Cyclomaltodextrin glucanotransferase (cgt).